A 352-amino-acid chain; its full sequence is Photosystem II D2 protein 2 (352 aa).

The chain crosses the membrane as a helical span at residues 40–60 (CAYLALGGWLTGTSFVTSWYT). Chlorophyll a is bound at residue histidine 117. Residues 124 to 140 (GFMLRQFEIARLVGVRP) form a helical membrane-spanning segment. The pheophytin a site is built by glutamine 129 and asparagine 142. Residues 152–165 (VFVSVFLMYPLGQS) form a helical membrane-spanning segment. Histidine 197 contacts chlorophyll a. The chain crosses the membrane as a helical span at residues 207–227 (GALLCAIHGATVENTLFEDSE). Residues histidine 214 and phenylalanine 261 each contribute to the a plastoquinone site. Residue histidine 214 coordinates Fe cation. Histidine 268 provides a ligand contact to Fe cation. The chain crosses the membrane as a helical span at residues 278-294 (GLWMSSIGIVGLALNLR).

It belongs to the reaction center PufL/M/PsbA/D family. PSII is composed of 1 copy each of membrane proteins PsbA, PsbB, PsbC, PsbD, PsbE, PsbF, PsbH, PsbI, PsbJ, PsbK, PsbL, PsbM, PsbT, PsbX, PsbY, PsbZ, Psb30/Ycf12, peripheral proteins PsbO, CyanoQ (PsbQ), PsbU, PsbV and a large number of cofactors. It forms dimeric complexes. The D1/D2 heterodimer binds P680, chlorophylls that are the primary electron donor of PSII, and subsequent electron acceptors. It shares a non-heme iron and each subunit binds pheophytin, quinone, additional chlorophylls, carotenoids and lipids. There is also a Cl(-1) ion associated with D1 and D2, which is required for oxygen evolution. The PSII complex binds additional chlorophylls, carotenoids and specific lipids. is required as a cofactor.

Its subcellular location is the cellular thylakoid membrane. It carries out the reaction 2 a plastoquinone + 4 hnu + 2 H2O = 2 a plastoquinol + O2. In terms of biological role, photosystem II (PSII) is a light-driven water:plastoquinone oxidoreductase that uses light energy to abstract electrons from H(2)O, generating O(2) and a proton gradient subsequently used for ATP formation. It consists of a core antenna complex that captures photons, and an electron transfer chain that converts photonic excitation into a charge separation. The D1/D2 (PsbA/PsbD) reaction center heterodimer binds P680, the primary electron donor of PSII as well as several subsequent electron acceptors. D2 is needed for assembly of a stable PSII complex. The protein is Photosystem II D2 protein 2 of Synechococcus sp. (strain ATCC 27144 / PCC 6301 / SAUG 1402/1) (Anacystis nidulans).